A 513-amino-acid chain; its full sequence is Maturase K (513 aa).

The protein belongs to the intron maturase 2 family. MatK subfamily.

Its subcellular location is the plastid. It is found in the chloroplast. Usually encoded in the trnK tRNA gene intron. Probably assists in splicing its own and other chloroplast group II introns. This is Maturase K from Astrebla lappacea (Curly Mitchell grass).